The sequence spans 92 residues: Putative regulatory protein CA_C1717 (92 aa).

It belongs to the RemA family.

This chain is Putative regulatory protein CA_C1717, found in Clostridium acetobutylicum (strain ATCC 824 / DSM 792 / JCM 1419 / IAM 19013 / LMG 5710 / NBRC 13948 / NRRL B-527 / VKM B-1787 / 2291 / W).